The chain runs to 272 residues: NH(3)-dependent NAD(+) synthetase (272 aa).

45–52 (GISGGQDS) is a binding site for ATP. Aspartate 51 serves as a coordination point for Mg(2+). Arginine 138 is a deamido-NAD(+) binding site. Threonine 158 lines the ATP pocket. Residue glutamate 163 participates in Mg(2+) binding. 2 residues coordinate deamido-NAD(+): lysine 171 and aspartate 178. Lysine 187 and threonine 209 together coordinate ATP. 258–259 (HK) serves as a coordination point for deamido-NAD(+).

Belongs to the NAD synthetase family. In terms of assembly, homodimer.

The enzyme catalyses deamido-NAD(+) + NH4(+) + ATP = AMP + diphosphate + NAD(+) + H(+). It functions in the pathway cofactor biosynthesis; NAD(+) biosynthesis; NAD(+) from deamido-NAD(+) (ammonia route): step 1/1. Its function is as follows. Catalyzes the ATP-dependent amidation of deamido-NAD to form NAD. Uses ammonia as a nitrogen source. The protein is NH(3)-dependent NAD(+) synthetase of Bacillus cereus (strain AH187).